The primary structure comprises 173 residues: Transcription factor S-II-related protein (173 aa).

The TFIIS central domain maps to 9–129 (ISDKEREIVI…EETLNQMATV (121 aa)). Residues 130-170 (EWKPCYACKNTSYHFYQLQTRSADEPMTTFYICKNCMKTYK) form a TFIIS-type zinc finger. Cys134, Cys137, Cys162, and Cys165 together coordinate Zn(2+).

Belongs to the TFS-II family.

The chain is Transcription factor S-II-related protein from Acanthamoeba polyphaga mimivirus (APMV).